We begin with the raw amino-acid sequence, 70 residues long: MPTSVKCPTCQKDVIWNNESKFKPFCCERCKLIDLGDWASEKHAIPVKPEFDADDLDNLGYDEADFFKEN.

Zn(2+)-binding residues include C7, C10, C26, and C30.

Belongs to the DNA gyrase inhibitor YacG family. As to quaternary structure, interacts with GyrB. Requires Zn(2+) as cofactor.

In terms of biological role, inhibits all the catalytic activities of DNA gyrase by preventing its interaction with DNA. Acts by binding directly to the C-terminal domain of GyrB, which probably disrupts DNA binding by the gyrase. In Shewanella woodyi (strain ATCC 51908 / MS32), this protein is DNA gyrase inhibitor YacG.